Reading from the N-terminus, the 335-residue chain is Serpentine receptor class XA 10 (335 aa).

Over 1–10 the chain is Extracellular; the sequence is MDVDAAVVKR. The helical transmembrane segment at 11–31 threads the bilayer; that stretch reads IALWVYETCSVFNLFYCITLS. Over 32-46 the chain is Cytoplasmic; sequence LAIKTSKNNALPATY. A helical transmembrane segment spans residues 47-67; the sequence is IYNMAISNALLVIFGIMVYIL. Topologically, residues 68–82 are extracellular; that stretch reads PYYMSDKTYKTYRDS. The chain crosses the membrane as a helical span at residues 83–103; the sequence is IGAMISVGVTFNYLHPMLTLI. At 104-126 the chain is on the cytoplasmic side; sequence LMTINRIAVVVSMQASQLFTSSK. Residues 127 to 147 traverse the membrane as a helical segment; it reads IWLYTSFHMTANFACLIIPYL. The Extracellular segment spans residues 148–177; it reads SECRINYDIRKVGFISECAPDRHQITTFSN. A helical membrane pass occupies residues 178–198; that stretch reads YYSVFFPFVAFFFNVLVIINF. At 199-238 the chain is on the cytoplasmic side; that stretch reads KLQRSPTYTKIKNMFRRGNGDQFTSMPSDVLKAKKKTERM. A helical transmembrane segment spans residues 239 to 259; the sequence is LMIQAFITAFYLSVYELTSLV. Topologically, residues 260-276 are extracellular; that stretch reads LRVVPELFGNLSLDGKL. Residues 277–297 traverse the membrane as a helical segment; that stretch reads AFTYFRLAQVPCHVFLVYFIF. The Cytoplasmic segment spans residues 298 to 319; sequence TPVTRKIYMDFVRERVFCMKPA.

Belongs to the nematode receptor-like protein srxa family.

Its subcellular location is the membrane. This chain is Serpentine receptor class XA 10 (srxa-10), found in Caenorhabditis elegans.